Consider the following 166-residue polypeptide: Myosin regulatory light chain 2, ventricular/cardiac muscle isoform (166 aa).

S2 bears the N,N,N-trimethylserine mark. S14, S15, and S19 each carry phosphoserine. 3 consecutive EF-hand domains span residues 24–59 (TQIQEFKEAFTIMDQNRDGFIDKNDLRDTFAALGRV), 94–129 (DPEETILNAFKVFDPEGKGSLKADYVREMLTTQAER), and 130–165 (FSKEEIDQMFAAFPPDVTGNLDYKNLVHIITHGEEK). Ca(2+) is bound by residues D37, N39, D41, and D48. T52 bears the Phosphothreonine mark.

Myosin is a hexamer of 2 heavy chains and 4 light chains. Interacts with MYOC. Post-translationally, N-terminus is methylated by METTL11A/NTM1. In terms of processing, phosphorylated by MYLK3 and MYLK2; promotes cardiac muscle contraction and function. Dephosphorylated by PPP1CB complexed to PPP1R12B. The phosphorylated form in adult is expressed as gradients across the heart from endocardium (low phosphorylation) to epicardium (high phosphorylation); regulates cardiac torsion and workload distribution. In terms of tissue distribution, abundantly expressed in both cardiac and slow skeletal muscle (soleus), with no detectable expression in fast skeletal muscle (vastus lateralis) or non-muscle tissue.

The protein localises to the cytoplasm. It localises to the myofibril. It is found in the sarcomere. The protein resides in the a band. In terms of biological role, contractile protein that plays a role in heart development and function. Following phosphorylation, plays a role in cross-bridge cycling kinetics and cardiac muscle contraction by increasing myosin lever arm stiffness and promoting myosin head diffusion; as a consequence of the increase in maximum contraction force and calcium sensitivity of contraction force. These events altogether slow down myosin kinetics and prolong duty cycle resulting in accumulated myosins being cooperatively recruited to actin binding sites to sustain thin filament activation as a means to fine-tune myofilament calcium sensitivity to force. During cardiogenesis plays an early role in cardiac contractility by promoting cardiac myofibril assembly. The polypeptide is Myosin regulatory light chain 2, ventricular/cardiac muscle isoform (Rattus norvegicus (Rat)).